The following is a 558-amino-acid chain: Protein shisa-7 (558 aa).

Residues 1–22 form the signal peptide; it reads MPALLLLGTVALLASAAGPAGA. Residues 23-189 are Extracellular-facing; it reads RPSNDTSSVA…GGEGPGGSTA (167 aa). Asn-26 carries an N-linked (GlcNAc...) asparagine glycan. Disordered regions lie at residues 53-79 and 142-181; these read GGSA…ARAP and TPPP…GRGG. The segment covering 57 to 77 has biased composition (low complexity); sequence AGTSANATKTSPASGTGAAAR. The span at 148–181 shows a compositional bias: gly residues; it reads GGAGGAGGAGGGPGPGQAGWLEGGRAGGAGGRGG. The GRID stretch occupies residues 154-175; that stretch reads GGAGGGPGPGQAGWLEGGRAGG. Residues 190 to 210 form a helical membrane-spanning segment; it reads YVVCGVISFALAVGVGAKVAF. The Cytoplasmic segment spans residues 211 to 558; that stretch reads SKASRAPRAH…RTASKNEVTV (348 aa). Positions 236-263 are disordered; the sequence is QAGPATRPDRARSSSLTPGLGGPDSMAP. Ser-438 is subject to Phosphoserine. The disordered stretch occupies residues 443-506; it reads RQSREHLLSP…HHHHALHGSP (64 aa). Pro residues predominate over residues 453-462; sequence PRSPALPPDP. Residues 466-477 show a composition bias toward low complexity; sequence ASLAASHSNLLL. A Phosphothreonine modification is found at Thr-532. The PDZ-binding motif lies at 555–558; the sequence is EVTV.

The protein belongs to the shisa family. As to quaternary structure, interacts with GABA(A)R (GABA type A receptor) subunits GABRA1, GABRA2 and GABRG2; the interaction is direct. Does not interact with GABRB2 and GABRB3 subunits. Interacts with AMPAR subunits GRIA1, GRIA2 and GRIA3 and AMPAR auxiliary proteins SHISA6 and SHISA7 in heterologous cells. Interacts (via PDZ-binding motif) with DLG4/PSD-95 (via PDZ domain)in heterologous cells; the interaction is direct. N-glycosylated. In terms of tissue distribution, mainly expressed in neurons. Highly expressed in brain structures including cortex, striatum, olfactory bulb, amygdala hippocampus CA1-3 and dentate gyrus (at protein level).

Its subcellular location is the postsynaptic density membrane. Transmembrane protein that regulates gamma-aminobutyric acid type A receptor (GABA(A)R) trafficking, channel deactivation kinetics and pharmacology, necessary for fast inhibitory transmission in the brain. Enhances the action of benzodiazepine, a primary GABA(A)Rs target drug, in the brain. May affect channel kinetics of AMPA-type glutamate receptors (AMPAR), the brain's main excitatory neurotransmitter, necessary for synaptic hippocampal plasticity, and memory recall. May regulate the induction and maintenance of long-term potentiation at Schaffer collaterals/CA3-CA1 excitatory synapses. The protein is Protein shisa-7 of Mus musculus (Mouse).